We begin with the raw amino-acid sequence, 121 residues long: Movement protein TGBp3 (121 aa).

Residues 1 to 40 are disordered; that stretch reads MHYPTEADTSTGPNPSATSAPVRPRHVTPSLSPSSSSSPS. The Lumenal segment spans residues 1-43; sequence MHYPTEADTSTGPNPSATSAPVRPRHVTPSLSPSSSSSPSPDS. The span at 7-19 shows a compositional bias: polar residues; that stretch reads ADTSTGPNPSATS. Residues 29-40 show a composition bias toward low complexity; it reads PSLSPSSSSSPS. Residues 44–64 form a helical membrane-spanning segment; sequence FYYFLAAAVILTAALAAALLT. Over 65-121 the chain is Cytoplasmic; the sequence is PNPGCTIVITGHTTIIQGSCPIPPQLVLAAHPRGLSLEQYLKFTNTLPDGSQHRSHR.

The protein belongs to the Tymovirales TGBp3 protein family.

It is found in the host endoplasmic reticulum membrane. Plays a role in viral cell-to-cell propagation, by facilitating genome transport to neighboring plant cells through plasmosdesmata. May induce the formation of granular vesicles derived from the Endoplasmic reticulum, which align on actin filaments. In Plantago asiatica (P1AMV), this protein is Movement protein TGBp3.